The following is a 502-amino-acid chain: MAIKAEEISALLRSQIENYESEMSVTDVGTVLQIGDGIALIHGLNDVMAGELVEFHNGVLGLAQNLEESNVGVVILGPYTGITEGDEVKRTGRIMEVPVGEELIGRVVNPLGQPIDGQGPINTTKTRPVEKKATGVMDRKSVDEPLQTGIKAIDALVPIGRGQRELIIGDRQTGKTTIAIDTILNQKDQGTICIYVAIGQKDSTVRANVEKLRQAGALDYTIVVAASASEPSPLLYIAPYSGVTMGEEFMFNGKHVLIVYDDLTKQAAAYRELSLLLRRPPGREAYPGDVFYLHSRLLERAAKLNDDLGGGSITALPIIETQAGDISAYVPTNVISITDGQIFLQSDLFFSGVRPAINAGQSVSRVGGSAQINAMKKVAGTLRLDLASYRELESFAQFGSDLDEFTASKLERGKRTVEVLKQDQNKPLPVEHQVLIIYALTKGYLDDIPVVDITRFEDELNHWAESNATELLNEIRETGGLPDAEKFDTAINEFKKSFSKSE.

An ATP-binding site is contributed by 169–176 (GDRQTGKT).

It belongs to the ATPase alpha/beta chains family. F-type ATPases have 2 components, CF(1) - the catalytic core - and CF(0) - the membrane proton channel. CF(1) has five subunits: alpha(3), beta(3), gamma(1), delta(1), epsilon(1). CF(0) has three main subunits: a(1), b(2) and c(9-12). The alpha and beta chains form an alternating ring which encloses part of the gamma chain. CF(1) is attached to CF(0) by a central stalk formed by the gamma and epsilon chains, while a peripheral stalk is formed by the delta and b chains.

It localises to the cell membrane. The enzyme catalyses ATP + H2O + 4 H(+)(in) = ADP + phosphate + 5 H(+)(out). In terms of biological role, produces ATP from ADP in the presence of a proton gradient across the membrane. The alpha chain is a regulatory subunit. The sequence is that of ATP synthase subunit alpha from Staphylococcus aureus (strain COL).